Reading from the N-terminus, the 31-residue chain is Cyclotide vibi-F (31 aa).

Residues 1–31 (GTIPCGESCVFIPCLTSALGCSCKSKVCYKN) constitute a cross-link (cyclopeptide (Gly-Asn)). Disulfide bonds link cysteine 5–cysteine 21, cysteine 9–cysteine 23, and cysteine 14–cysteine 28.

This is a cyclic peptide.

Functionally, probably participates in a plant defense mechanism. The chain is Cyclotide vibi-F from Viola biflora (Yellow wood violet).